Reading from the N-terminus, the 253-residue chain is POU Class 2 homeobox-associating factor 3 (253 aa).

An OCA domain is found at 5-27 (PKVYQGVRVKMTVKELLQQRRAH).

Belongs to the POU2AF family. Interacts with POU2F3 in a DNA-dependent manner; this interaction increases POU2F3 transactivation activity. In terms of tissue distribution, expressed in tuft cells.

The protein resides in the cytoplasm. Its subcellular location is the nucleus. Transcriptional coactivator that specifically associates with POU2F3. This complex drives the development of tuft cells, a rare a rare chemosensory cells that coordinate immune and neural functions within mucosal epithelial tissues. The chain is POU Class 2 homeobox-associating factor 3 from Mus musculus (Mouse).